Here is a 424-residue protein sequence, read N- to C-terminus: S-inosyl-L-homocysteine hydrolase (424 aa).

Residues Asp-130 and Glu-155 each coordinate substrate. 156-158 (TTT) lines the NAD(+) pocket. Residues Lys-185 and Asp-189 each contribute to the substrate site. NAD(+) is bound by residues Asn-190, 219-224 (GYGWCG), Glu-242, Asn-277, 298-300 (AGH), and Asn-346.

This sequence belongs to the adenosylhomocysteinase family. NAD(+) serves as cofactor.

It localises to the cytoplasm. It catalyses the reaction S-inosyl-L-homocysteine + H2O = L-homocysteine + inosine. Its pathway is amino-acid biosynthesis; S-adenosyl-L-methionine biosynthesis. Catalyzes the hydrolysis of S-inosyl-L-homocysteine (SIH) to L-homocysteine (Hcy) and inosine. Likely functions in a S-adenosyl-L-methionine (SAM) recycling pathway from S-adenosyl-L-homocysteine (SAH) produced from SAM-dependent methylation reactions. Can also catalyze the reverse reaction in vitro, i.e. the synthesis of SIH from Hcy and inosine. The protein is S-inosyl-L-homocysteine hydrolase of Methanopyrus kandleri (strain AV19 / DSM 6324 / JCM 9639 / NBRC 100938).